The sequence spans 387 residues: WD repeat-containing protein 55 (387 aa).

The span at 1–10 (MATPTEHEDL) shows a compositional bias: basic and acidic residues. Residues 1–24 (MATPTEHEDLSEQEVTEDEFKTPK) form a disordered region. WD repeat units lie at residues 33–72 (KLEA…GENK), 79–118 (HHLK…LETR), 122–160 (AHKV…SFMD), 163–202 (HHED…FELL), 205–244 (IQNG…ATSD), 247–286 (AVQA…VVGS), and 290–329 (HVGE…DEKV). Positions 356-387 (FFAGLLDTTEENGKEGENDEDDDDEDSDSGSD) are disordered. Residues 372–387 (ENDEDDDDEDSDSGSD) are compositionally biased toward acidic residues.

The protein belongs to the WD repeat WDR55 family.

The protein resides in the nucleus. It is found in the nucleolus. Nucleolar protein that acts as a modulator of rRNA synthesis. Plays a central role during organogenesis. This Danio rerio (Zebrafish) protein is WD repeat-containing protein 55 (wdr55).